Consider the following 1011-residue polypeptide: Probable calcium-transporting ATPase (1011 aa).

Residues 1-65 (MLPENLPTDP…WKLVLAQFED (65 aa)) lie on the Cytoplasmic side of the membrane. Residues 66-84 (TLVRILLLAATVSFAMAVV) traverse the membrane as a helical segment. Residues 85-90 (ENNAAD) lie on the Extracellular side of the membrane. The helical transmembrane segment at 91–110 (FVEPFIILLILILNATVGVW) threads the bilayer. The Cytoplasmic segment spans residues 111–258 (QENRAEGAIE…QVKLDEFGVL (148 aa)). A helical transmembrane segment spans residues 259–278 (LSKVIGYICLVVFAVNLVRW). Residues 279 to 303 (YATHKPTKNETFFTRYIQPSVHCLK) are Extracellular-facing. Residues 304–321 (VAVALAVAAIPEGLPAVV) traverse the membrane as a helical segment. Over 322-770 (TTCLALGTRR…RYLISSNIGE (449 aa)) the chain is Cytoplasmic. The 4-aspartylphosphate intermediate role is filled by Asp357. Residue Lys514 participates in ATP binding. Residues 771-794 (VVCILVTGLFGLPEALSPVQLLWV) traverse the membrane as a helical segment. Topologically, residues 795-835 (NLVTDGLPATALGFNAPDRDIMEQRPRRMEEPIVNGWLFMR) are extracellular. The helical transmembrane segment at 836–856 (YMVIGVYVGLATVGGFLWWFL) threads the bilayer. The Cytoplasmic portion of the chain corresponds to 857–885 (RHGFSWHDLTTYTACSDMTNGTCLLLANP). A helical transmembrane segment spans residues 886-905 (QTARAIALSILVVVEMLNAL). The Extracellular segment spans residues 906 to 922 (NALSENASLIVSRPSSN). Residues 923-942 (VWLLFAIFSSLSLHLIIMYV) traverse the membrane as a helical segment. At 943-1011 (PFFAKLFNIV…MEKAQEKKKD (69 aa)) the chain is on the cytoplasmic side.

The protein belongs to the cation transport ATPase (P-type) (TC 3.A.3) family.

It localises to the flagellar pocket. It is found in the cell membrane. It carries out the reaction Ca(2+)(in) + ATP + H2O = Ca(2+)(out) + ADP + phosphate + H(+). Its function is as follows. This magnesium-dependent enzyme catalyzes the hydrolysis of ATP coupled with the transport of the calcium. This chain is Probable calcium-transporting ATPase (TBA1), found in Trypanosoma brucei brucei.